The primary structure comprises 225 residues: UPF0758 protein Sez_1052 (225 aa).

The MPN domain maps to 102–224; that stretch reads PVLSSAQVAE…YYSFREKSDL (123 aa). Zn(2+) is bound by residues histidine 173, histidine 175, and aspartate 186. A JAMM motif motif is present at residues 173 to 186; it reads HNHPSGLTKPSAND.

It belongs to the UPF0758 family.

The chain is UPF0758 protein Sez_1052 from Streptococcus equi subsp. zooepidemicus (strain MGCS10565).